Reading from the N-terminus, the 426-residue chain is Enolase (426 aa).

Gln163 is a binding site for (2R)-2-phosphoglycerate. Glu205 (proton donor) is an active-site residue. Residues Asp242, Glu283, and Asp310 each contribute to the Mg(2+) site. Lys335, Arg364, Ser365, and Lys386 together coordinate (2R)-2-phosphoglycerate. Lys335 functions as the Proton acceptor in the catalytic mechanism.

Belongs to the enolase family. The cofactor is Mg(2+).

It is found in the cytoplasm. The protein localises to the secreted. Its subcellular location is the cell surface. The enzyme catalyses (2R)-2-phosphoglycerate = phosphoenolpyruvate + H2O. Its pathway is carbohydrate degradation; glycolysis; pyruvate from D-glyceraldehyde 3-phosphate: step 4/5. Functionally, catalyzes the reversible conversion of 2-phosphoglycerate (2-PG) into phosphoenolpyruvate (PEP). It is essential for the degradation of carbohydrates via glycolysis. The chain is Enolase from Paenarthrobacter aurescens (strain TC1).